The primary structure comprises 142 residues: Prefoldin subunit alpha (142 aa).

Belongs to the prefoldin subunit alpha family. As to quaternary structure, heterohexamer of two alpha and four beta subunits.

It is found in the cytoplasm. In terms of biological role, molecular chaperone capable of stabilizing a range of proteins. Seems to fulfill an ATP-independent, HSP70-like function in archaeal de novo protein folding. This chain is Prefoldin subunit alpha, found in Methanosarcina acetivorans (strain ATCC 35395 / DSM 2834 / JCM 12185 / C2A).